Consider the following 88-residue polypeptide: Small ribosomal subunit protein bS20 (88 aa).

The interval 1–26 (MANTAQARKRARQNTKRRQNSASQRS) is disordered. The segment covering 7-19 (ARKRARQNTKRRQ) has biased composition (basic residues).

The protein belongs to the bacterial ribosomal protein bS20 family.

In terms of biological role, binds directly to 16S ribosomal RNA. This chain is Small ribosomal subunit protein bS20, found in Psychrobacter arcticus (strain DSM 17307 / VKM B-2377 / 273-4).